Consider the following 127-residue polypeptide: Protein yippee-like 4 (127 aa).

One can recognise a Yippee domain in the interval 27-124 (RTYSCVHCRA…IEMSHMVKDN (98 aa)). C31, C34, C87, and C90 together coordinate Zn(2+). 2 positions are modified to phosphothreonine: T92 and T93. Y98 carries the phosphotyrosine modification.

Belongs to the yippee family. In terms of tissue distribution, detected in brain, spleen and testis.

Its subcellular location is the nucleus. It is found in the nucleolus. This Mus musculus (Mouse) protein is Protein yippee-like 4 (Ypel4).